Consider the following 1113-residue polypeptide: uncharacterized protein (1113 aa).

Glycine 313 to serine 320 contributes to the ATP binding site.

The protein belongs to the DNA2/NAM7 helicase family.

This is an uncharacterized protein from Mycoplasma genitalium (strain ATCC 33530 / DSM 19775 / NCTC 10195 / G37) (Mycoplasmoides genitalium).